The following is a 140-amino-acid chain: Putative pre-16S rRNA nuclease (140 aa).

Belongs to the YqgF nuclease family.

It is found in the cytoplasm. In terms of biological role, could be a nuclease involved in processing of the 5'-end of pre-16S rRNA. The chain is Putative pre-16S rRNA nuclease from Moorella thermoacetica (strain ATCC 39073 / JCM 9320).